The following is a 346-amino-acid chain: CLOCK-interacting pacemaker (346 aa).

Positions 1 to 42 (MEKNQKCATEQERFKARSGHGDGQRAEPRKTQTTTESDKDSG) are enriched in basic and acidic residues. Disordered regions lie at residues 1–83 (MEKN…SQPQ) and 167–228 (CARK…KELD). The segment covering 50–68 (CLSSVEQTDTEEGPTTSRW) has biased composition (polar residues). Over residues 179 to 192 (NQTKRQCSKGHSGS) the composition is skewed to basic residues. Residues 205-222 (GVQQGPVDQNVKESSVSA) are compositionally biased toward polar residues. Residues 283–315 (MKTKELARHNQATQSQLEKLQEQVQLYATAMSS) are a coiled coil.

Its subcellular location is the nucleus. The protein resides in the cytoplasm. It localises to the cytosol. Functionally, transcriptional repressor which acts as a negative-feedback regulator of CLOCK-BMAL1 transcriptional activity in the circadian-clock mechanism. The physiological relevance of these observations is unsure. This is CLOCK-interacting pacemaker (cipc) from Xenopus laevis (African clawed frog).